The primary structure comprises 565 residues: MWRLRLLVLAVLAAGSAEAQANSSDGFLEFSVGKFTYFVLSKSSPQEAVLRHISSNVTFLLFQIHSQYQNTTVSFTKTLLPSTSGTGNDRGLVFILRPEQAVCTWYLETGDTKPVQSVALTLSYSERDPIPGGCNLEFDLDIDPNLYLDYNFFETTIKFAPANIGYARATEPPPCDVSTSRESRWRLRYDVYQYFLPEGDLTEASLLHHLQRMAQVAQVKASAIKVATLTADDKTAVSFSSLPGQGVIYNVIVWDPSLNTSAAYVPVHTYACSFESVDGNCASPGRVSTKVFSTLFALLGLFVCFFGHRFWKTDLFFVGFIFLGFFFYILITRLTPLQYDVRLALTAVAGSFGGLLLVASWWRFGILTLCMLCVGLVLGFLVSSGTFFTPLGNLNVFHDDGVFWVTFSCIALLVPVIFMGCLRILNILACGVVGSYSVVLAVNSYMFTSLSYITLNVLRRALNTDFRGAFIRVPFQTNDYIILAVWGMLAVSGITLQIRRERGQPPFPPHPYKLWKQERERRVTNILDPSHHIPPLRERLYGRVARIKELFQKEQPAGERTPLLL.

The first 21 residues, 1 to 21 (MWRLRLLVLAVLAAGSAEAQA), serve as a signal peptide directing secretion. 4 N-linked (GlcNAc...) asparagine glycosylation sites follow: N22, N56, N70, and N259. The next 7 helical transmembrane spans lie at 287–307 (VSTK…CFFG), 315–335 (LFFV…TRLT), 341–361 (VRLA…VASW), 364–384 (FGIL…LVSS), 402–422 (VFWV…MGCL), 427–447 (ILAC…SYMF), and 478–498 (NDYI…TLQI).

Its subcellular location is the cell membrane. In terms of biological role, involved in the inhibition of cytokine-induced death of pancreatic beta cells. Involved in the promotion of insulin secretion from pancreatic beta cells. Is a downstream transcriptional target of p53/TP53, and acts as a pro-survival homeostatic factor that attenuates the development of cellular stress. Maintains protein homeostasis and promotes cell survival through attenuation of endoplasmic reticulum (ER) stress and the subsequent induction of unfolded protein response (UPR). The protein is Transmembrane 7 superfamily member 3 (Tm7sf3) of Mus musculus (Mouse).